A 717-amino-acid polypeptide reads, in one-letter code: Delta-1-pyrroline-5-carboxylate synthase (717 aa).

Residues 1 to 296 (METVDSTRAF…WASIGETDAR (296 aa)) are glutamate 5-kinase. Residues Ser60, Asp157, and Asn176 each contribute to the substrate site. Residues 196–197 (SD) and 236–242 (RGGMTAK) contribute to the ATP site. Positions 297–717 (EMAVAARACS…YSHKDLTQQG (421 aa)) are gamma-glutamyl phosphate reductase.

In the N-terminal section; belongs to the glutamate 5-kinase family. It in the C-terminal section; belongs to the gamma-glutamyl phosphate reductase family. Expressed at high levels in leaves and is inducible in roots subjected to salt stress.

It carries out the reaction L-glutamate + ATP = L-glutamyl 5-phosphate + ADP. The catalysed reaction is L-glutamate 5-semialdehyde + phosphate + NADP(+) = L-glutamyl 5-phosphate + NADPH + H(+). The protein operates within amino-acid biosynthesis; L-proline biosynthesis; L-glutamate 5-semialdehyde from L-glutamate: step 1/2. It functions in the pathway amino-acid biosynthesis; L-proline biosynthesis; L-glutamate 5-semialdehyde from L-glutamate: step 2/2. With respect to regulation, feedback regulated by proline. In terms of biological role, P5CS plays a key role in proline biosynthesis, leading to osmoregulation in plants. The polypeptide is Delta-1-pyrroline-5-carboxylate synthase (PRO2) (Solanum lycopersicum (Tomato)).